Consider the following 233-residue polypeptide: Purine nucleoside phosphorylase DeoD-type (233 aa).

H4 serves as a coordination point for a purine D-ribonucleoside. Phosphate-binding positions include G20, R24, R43, and 87 to 90 (RIGT). Residues 179 to 181 (EME) and 203 to 204 (SD) each bind a purine D-ribonucleoside. D204 acts as the Proton donor in catalysis.

Belongs to the PNP/UDP phosphorylase family. In terms of assembly, homohexamer; trimer of homodimers.

The enzyme catalyses a purine D-ribonucleoside + phosphate = a purine nucleobase + alpha-D-ribose 1-phosphate. The catalysed reaction is a purine 2'-deoxy-D-ribonucleoside + phosphate = a purine nucleobase + 2-deoxy-alpha-D-ribose 1-phosphate. Catalyzes the reversible phosphorolytic breakdown of the N-glycosidic bond in the beta-(deoxy)ribonucleoside molecules, with the formation of the corresponding free purine bases and pentose-1-phosphate. This is Purine nucleoside phosphorylase DeoD-type from Helicobacter pylori (strain P12).